Reading from the N-terminus, the 573-residue chain is Probable D-xylulose kinase A (573 aa).

Substrate-binding residues include His-97, Arg-168, Asp-284, and Asn-285. ATP contacts are provided by residues Trp-366, 471-472 (GG), and Asn-475.

It belongs to the FGGY kinase family.

The protein localises to the cytoplasm. It carries out the reaction D-xylulose + ATP = D-xylulose 5-phosphate + ADP + H(+). Its function is as follows. Highly specific D-xylulose kinase which participates in the catabolism of xylose. Xylose is a major component of hemicelluloses such as xylan. Most fungi utilize D-xylose via three enzymatic reactions, xylose reductase (XR), xylitol dehydrogenase (XDH), and xylulokinase, to form xylulose 5-phosphate, which enters pentose phosphate pathway. This is Probable D-xylulose kinase A (xkiA) from Aspergillus clavatus (strain ATCC 1007 / CBS 513.65 / DSM 816 / NCTC 3887 / NRRL 1 / QM 1276 / 107).